The following is a 573-amino-acid chain: MIDRLGSLFESAASMLPMSEARSFELFTEITNYDETACDAWIGRIRCGDTDRVTLFRAWYSRRNFGQLSGSVQIPMTTLNARVPIGGLYGDITYPVTSPLAITMGFAACEAAQGNFADAMEAIDATSITGSEHLVAWLKAVVYGAAERWTDVIDEVKGAGKWPDKFLAGAAGVAHGVAAANLGLFTEAERRLTEANDSPAGEACARSIAWYLAMARRSQGNEDAAVALLEWLQTTHPESKVSAALKDPSYRLTTTTAEQIAARADPWDPSSVVTDNSDRDRLLTQAQAELDRQIGLTRVKTQIERYRAATMMAKVRAAKGMKVAQPSKHMIFTGPPGTGKTTIARVVANILAGLGVISEPKLVETSRKDFVAEYEGQSAVKAAKTIDLALGGVLFIDEAYALVQERDGRTDPFGQEALDTLLARMENDRDRLVVIIAGYSSDIDRLLETNEGLRSRFATRIEFDTYSPDELLEIAKVIATDADSSLSAEASKNLLEAAKQLAQRTLRGRPALDVAGNGRYARQLVEAAEQCRDMRLARGVDIEQLDVDRLQEINGSDMAEAIATVHAHLNIRE.

Residue 334–341 (GPPGTGKT) participates in ATP binding.

It belongs to the CbxX/CfxQ family. Part of the ESX-1 / type VII secretion system (T7SS), which is composed of cytosolic and membrane components.

The protein localises to the cytoplasm. Part of the ESX-1 / type VII specialized secretion system (T7SS), which exports several proteins including EsxA and EsxB. EccA1 exhibits ATPase activity and may provide energy for the export of ESX-1 substrates. This is ESX-1 secretion system protein EccA1 from Mycobacterium leprae (strain TN).